Here is a 101-residue protein sequence, read N- to C-terminus: Small ribosomal subunit protein uS14 (101 aa).

This sequence belongs to the universal ribosomal protein uS14 family. In terms of assembly, part of the 30S ribosomal subunit. Contacts proteins S3 and S10.

Its function is as follows. Binds 16S rRNA, required for the assembly of 30S particles and may also be responsible for determining the conformation of the 16S rRNA at the A site. The chain is Small ribosomal subunit protein uS14 from Chromobacterium violaceum (strain ATCC 12472 / DSM 30191 / JCM 1249 / CCUG 213 / NBRC 12614 / NCIMB 9131 / NCTC 9757 / MK).